The chain runs to 222 residues: Probable transaldolase 2 (222 aa).

Catalysis depends on K90, which acts as the Schiff-base intermediate with substrate.

Belongs to the transaldolase family. Type 3B subfamily.

It is found in the cytoplasm. It carries out the reaction D-sedoheptulose 7-phosphate + D-glyceraldehyde 3-phosphate = D-erythrose 4-phosphate + beta-D-fructose 6-phosphate. Its pathway is carbohydrate degradation; pentose phosphate pathway; D-glyceraldehyde 3-phosphate and beta-D-fructose 6-phosphate from D-ribose 5-phosphate and D-xylulose 5-phosphate (non-oxidative stage): step 2/3. Its function is as follows. Transaldolase is important for the balance of metabolites in the pentose-phosphate pathway. This Bacillus cereus (strain ATCC 14579 / DSM 31 / CCUG 7414 / JCM 2152 / NBRC 15305 / NCIMB 9373 / NCTC 2599 / NRRL B-3711) protein is Probable transaldolase 2.